The primary structure comprises 1157 residues: Myosin tail region-interacting protein MTI1 (1157 aa).

In terms of domain architecture, SH3 spans 5–69 (EVPFKVVAQF…PKSFVAVQGS (65 aa)). 2 disordered regions span residues 68–116 (GSEV…GPVP) and 135–156 (TAVSAQVQHDSSSGNGERKVPM). Polar residues predominate over residues 77 to 89 (SSPNTGSTEQRTI). Over residues 93–110 (VEQKDLPEPISPETKKET) the composition is skewed to basic and acidic residues. Residue S103 is modified to Phosphoserine. A compositionally biased stretch (polar residues) spans 138 to 149 (SAQVQHDSSSGN). A phosphoserine mark is found at S158 and S166. Disordered regions lie at residues 231 to 256 (PEPINRAQVESGRIETENDQLKKDLP) and 284 to 888 (KKAK…PKVA). Coiled coils occupy residues 234 to 301 (INRA…NKNE) and 356 to 430 (EKEQ…GASR). Basic and acidic residues-rich tracts occupy residues 242-256 (GRIETENDQLKKDLP), 284-296 (KKAKLEQEHERSA), and 312-383 (NEKT…RGEN). A compositionally biased stretch (acidic residues) spans 398–411 (EGDNDEEKEEEDSE). Composition is skewed to basic and acidic residues over residues 412-423 (ENRRAALRERMA) and 506-524 (KTLDPHATTEHEQKQEHGT). The segment covering 544 to 558 (DSDEDTDDHEFEDAN) has biased composition (acidic residues). Residue S565 is modified to Phosphoserine. The segment covering 574 to 585 (GNNESENVNSGE) has biased composition (low complexity). Over residues 597-606 (RTAEVSHDIE) the composition is skewed to basic and acidic residues. A compositionally biased stretch (polar residues) spans 607–641 (NSSQNTTGNVLPVSSPQTRVARNGSINSLTKSISG). A phosphoserine mark is found at S621, S631, and S634. The residue at position 636 (T636) is a Phosphothreonine. Residues S638 and S647 each carry the phosphoserine modification. Basic and acidic residues predominate over residues 642-653 (ENRRKSINEYHD). Residues 654–668 (TVSTNSSALTETAQD) are compositionally biased toward polar residues. 2 stretches are compositionally biased toward pro residues: residues 691–738 (PHPV…PVSS) and 747–765 (SIPPVPPTPPAPPAPPAPL). Positions 769–778 (KHNEVEEHVK) are enriched in basic and acidic residues. A compositionally biased stretch (pro residues) spans 795-808 (NTAPPLPRAPPVPP). A compositionally biased stretch (polar residues) spans 832–853 (QNVTASTPSMMSTQQRVPTSVL). The residue at position 850 (T850) is a Phosphothreonine. At S889 the chain carries Phosphoserine. T894 and T895 each carry phosphothreonine. Residue K1012 forms a Glycyl lysine isopeptide (Lys-Gly) (interchain with G-Cter in ubiquitin) linkage.

Binds to the SH3 domains of the type I myosins MYO3 and MYO5.

It is found in the cytoplasm. The protein resides in the cytoskeleton. Its subcellular location is the actin patch. Functionally, involved in the regulation of actin cytoskeleton. This Saccharomyces cerevisiae (strain ATCC 204508 / S288c) (Baker's yeast) protein is Myosin tail region-interacting protein MTI1 (BBC1).